The sequence spans 248 residues: Probable septum site-determining protein MinC (248 aa).

The tract at residues 94-126 is disordered; that stretch reads GMPPAMRGGQPAADFEAPAGEPQANPGAPEPQI.

Belongs to the MinC family. In terms of assembly, interacts with MinD and FtsZ.

In terms of biological role, cell division inhibitor that blocks the formation of polar Z ring septums. Rapidly oscillates between the poles of the cell to destabilize FtsZ filaments that have formed before they mature into polar Z rings. Prevents FtsZ polymerization. In Brucella suis biovar 1 (strain 1330), this protein is Probable septum site-determining protein MinC.